The sequence spans 397 residues: Protochlorophyllide reductase, chloroplastic (397 aa).

Residues 1 to 57 (MALTMSAKSVSARAQVSSKAQAAPAVAVSGRTSSRVMPAPALAARSSVARTPLVVCA) constitute a chloroplast transit peptide.

The protein belongs to the short-chain dehydrogenases/reductases (SDR) family. POR subfamily.

Its subcellular location is the plastid. The protein localises to the chloroplast. It carries out the reaction chlorophyllide a + NADP(+) = protochlorophyllide a + NADPH + H(+). Its pathway is porphyrin-containing compound metabolism; chlorophyll biosynthesis. In terms of biological role, phototransformation of protochlorophyllide (Pchlide) to chlorophyllide (Chlide). This is Protochlorophyllide reductase, chloroplastic (PORA) from Chlamydomonas reinhardtii (Chlamydomonas smithii).